The primary structure comprises 607 residues: Large ribosomal subunit assembly factor BipA (607 aa).

The 196-residue stretch at 3–198 (ENLRNIAIIA…AIVDHVPAPD (196 aa)) folds into the tr-type G domain. GTP is bound by residues 15–20 (DHGKTT) and 128–131 (NKVD). Residues 481-607 (GQRQNGVLIS…RRANRGQKEE (127 aa)) are C-terminal domain (CTD), required but not sufficient to bind 70S or 30S ribosomes.

The protein belongs to the TRAFAC class translation factor GTPase superfamily. Classic translation factor GTPase family. BipA subfamily. As to quaternary structure, monomer.

The protein resides in the cytoplasm. It carries out the reaction GTP + H2O = GDP + phosphate + H(+). Ribosome-associated GTPase is not affected by low levels of ppGpp, &gt;40 uM ppGpp and &gt;50 uM GDP inhibit GTPase. The C-terminus (residues 387-607 or 481-607) inhibits GTPase activity, in its absence kcat increases, but GTPase is no longer stimulated by 70S ribosome or 30S or 50S subunits. Its function is as follows. A 50S ribosomal subunit assembly protein with GTPase activity, required for 50S subunit assembly at low temperatures, may also play a role in translation. Binds GTP and analogs. Binds the 70S ribosome between the 30S and 50S subunits, in a similar position as ribosome-bound EF-G; it contacts a number of ribosomal proteins, both rRNAs and the A-site tRNA. A ribosome-stimulated GTPase, GTPase activity increases 4 fold in the presence of 70S ribosomes. Binds 70S ribosomes in the presence of GTP or its non-hydrolyzable analog GMPPNP; in the presence of ppGpp or under stress conditions it binds to 30S ribosomal subunits. The protein is Large ribosomal subunit assembly factor BipA of Salmonella typhimurium (strain LT2 / SGSC1412 / ATCC 700720).